The following is an 80-amino-acid chain: Protein FAM229B (80 aa).

The disordered stretch occupies residues 1–44 (MPFRFGTQPRRFPVEGGDSSIGLEPGLSSSAACNGKEMSPTRQL).

Belongs to the FAM229 family.

The polypeptide is Protein FAM229B (FAM229B) (Macaca fascicularis (Crab-eating macaque)).